The chain runs to 180 residues: MASEKSYKTVPVTGKNLAMIYHHMGNKTQSLEEAYKQLEKELGETQAPPPSPQSSLDGEPLSEGELEEISEEEEEEGEAPPPIPAKKRQRKNPSKAPAAKAPRNYGTPSYMLHVDLKHDIAGVLEEIRRASLKKPAHTPSIRNRTYPSITKRYLYERDSKKLQQYLDDSKKLLAKYSEGV.

The segment at 31 to 108 (LEEAYKQLEK…AKAPRNYGTP (78 aa)) is disordered. Positions 33 to 43 (EAYKQLEKELG) are enriched in basic and acidic residues. A compositionally biased stretch (acidic residues) spans 60–78 (PLSEGELEEISEEEEEEGE).

In Pantherophis guttatus (Corn snake), this protein is Putative protein 33K.